Here is a 152-residue protein sequence, read N- to C-terminus: SsrA-binding protein (152 aa).

The protein belongs to the SmpB family.

The protein resides in the cytoplasm. Required for rescue of stalled ribosomes mediated by trans-translation. Binds to transfer-messenger RNA (tmRNA), required for stable association of tmRNA with ribosomes. tmRNA and SmpB together mimic tRNA shape, replacing the anticodon stem-loop with SmpB. tmRNA is encoded by the ssrA gene; the 2 termini fold to resemble tRNA(Ala) and it encodes a 'tag peptide', a short internal open reading frame. During trans-translation Ala-aminoacylated tmRNA acts like a tRNA, entering the A-site of stalled ribosomes, displacing the stalled mRNA. The ribosome then switches to translate the ORF on the tmRNA; the nascent peptide is terminated with the 'tag peptide' encoded by the tmRNA and targeted for degradation. The ribosome is freed to recommence translation, which seems to be the essential function of trans-translation. The protein is SsrA-binding protein of Sulfurihydrogenibium sp. (strain YO3AOP1).